A 575-amino-acid chain; its full sequence is Proline--tRNA ligase (575 aa).

The protein belongs to the class-II aminoacyl-tRNA synthetase family. ProS type 1 subfamily. In terms of assembly, homodimer.

It is found in the cytoplasm. It catalyses the reaction tRNA(Pro) + L-proline + ATP = L-prolyl-tRNA(Pro) + AMP + diphosphate. Functionally, catalyzes the attachment of proline to tRNA(Pro) in a two-step reaction: proline is first activated by ATP to form Pro-AMP and then transferred to the acceptor end of tRNA(Pro). As ProRS can inadvertently accommodate and process non-cognate amino acids such as alanine and cysteine, to avoid such errors it has two additional distinct editing activities against alanine. One activity is designated as 'pretransfer' editing and involves the tRNA(Pro)-independent hydrolysis of activated Ala-AMP. The other activity is designated 'posttransfer' editing and involves deacylation of mischarged Ala-tRNA(Pro). The misacylated Cys-tRNA(Pro) is not edited by ProRS. This chain is Proline--tRNA ligase, found in Saccharophagus degradans (strain 2-40 / ATCC 43961 / DSM 17024).